A 563-amino-acid polypeptide reads, in one-letter code: Endogenous retroviral envelope protein HEMO (563 aa).

The signal sequence occupies residues 1–26 (MGSLSNYALLQLTLTAFLTILVQPQH). The Extracellular portion of the chain corresponds to 27 to 488 (LLAPVFRTLS…IFAKVGDWFR (462 aa)). 2 N-linked (GlcNAc...) asparagine glycosylation sites follow: N122 and N192. The chain crosses the membrane as a helical span at residues 489 to 509 (SWGYVLLIVLFCLFIFVLIYV). Over 510–563 (RVFRKSRRSLNSQPLNLALSPQQSAQLLVSETSCQVSNRAMKGLTTHQYDTSLL) the chain is Cytoplasmic.

The protein belongs to the gamma type-C retroviral envelope protein family. Post-translationally, N-glycosylated. Cleaved by some metalloproteinase at 432-Gln-Arg-433 (mainly) or 433-Arg-Gln-434, leading to release the secreted form (Endogenous retroviral envelope protein HEMO, secreted form) in the extracellular medium. As to expression, expressed at high level in the placenta and stem cells (at protein level). Also expressed in the kidney but at a lower level. Endogenous retroviral envelope protein HEMO, secreted form: Present in the blood of pregnant women (at protein level).

It localises to the cell membrane. The protein localises to the secreted. Endogenous envelope proteins originate from retroviral envelope proteins, which mediate receptor recognition and membrane fusion during early infection. Endogenous envelope proteins may have kept, lost or modified their original function during evolution. The sequence is that of Endogenous retroviral envelope protein HEMO from Homo sapiens (Human).